Here is a 100-residue protein sequence, read N- to C-terminus: Cytochrome bo(3) ubiquinol oxidase subunit 4 (100 aa).

Residues 1–9 (MLKNRYLKY) are Cytoplasmic-facing. A helical membrane pass occupies residues 10 to 32 (LFILILLSILSIMPIFAIIYRIF). The Extracellular segment spans residues 33 to 36 (SRNY). The helical transmembrane segment at 37 to 59 (LYAFIIVCLFFQILAHIKFFLNL) threads the bilayer. Residues 60–68 (DFSLEQRWK) lie on the Cytoplasmic side of the membrane. The chain crosses the membrane as a helical span at residues 69–90 (LISVIFSLVVGLIILLGSIWVI). The Extracellular segment spans residues 91–100 (KNLNNNLCIM).

This sequence belongs to the cytochrome c oxidase bacterial subunit 4 family. As to quaternary structure, heterooctamer of two A chains, two B chains, two C chains and two D chains.

It is found in the cell membrane. Its function is as follows. Cytochrome bo(3) ubiquinol terminal oxidase is the component of the aerobic respiratory chain of E.coli that predominates when cells are grown at high aeration. Has proton pump activity across the membrane in addition to electron transfer, pumping 2 protons/electron. This is Cytochrome bo(3) ubiquinol oxidase subunit 4 (cyoD) from Buchnera aphidicola subsp. Baizongia pistaciae (strain Bp).